Reading from the N-terminus, the 474-residue chain is Light-independent protochlorophyllide reductase subunit N (474 aa).

[4Fe-4S] cluster contacts are provided by Cys22, Cys47, and Cys107.

It belongs to the BchN/ChlN family. Protochlorophyllide reductase is composed of three subunits; ChlL, ChlN and ChlB. Forms a heterotetramer of two ChlB and two ChlN subunits. It depends on [4Fe-4S] cluster as a cofactor.

It is found in the plastid. It localises to the chloroplast. The enzyme catalyses chlorophyllide a + oxidized 2[4Fe-4S]-[ferredoxin] + 2 ADP + 2 phosphate = protochlorophyllide a + reduced 2[4Fe-4S]-[ferredoxin] + 2 ATP + 2 H2O. It functions in the pathway porphyrin-containing compound metabolism; chlorophyll biosynthesis (light-independent). Its function is as follows. Component of the dark-operative protochlorophyllide reductase (DPOR) that uses Mg-ATP and reduced ferredoxin to reduce ring D of protochlorophyllide (Pchlide) to form chlorophyllide a (Chlide). This reaction is light-independent. The NB-protein (ChlN-ChlB) is the catalytic component of the complex. The polypeptide is Light-independent protochlorophyllide reductase subunit N (Physcomitrium patens (Spreading-leaved earth moss)).